The chain runs to 456 residues: RNA polymerase II-associated protein 1 homolog (456 aa).

The tract at residues 382-456 (LRSVEGSLNE…PVEQLQNEED (75 aa)) is disordered. At serine 388 the chain carries Phosphoserine. Over residues 396–406 (EEKPAESREQL) the composition is skewed to basic and acidic residues. Composition is skewed to polar residues over residues 408–433 (SAEQ…QANS) and 441–456 (GNTQ…NEED).

It belongs to the PAF1 family.

Its subcellular location is the cytoplasm. The protein resides in the nucleus. The protein is RNA polymerase II-associated protein 1 homolog of Schizosaccharomyces pombe (strain 972 / ATCC 24843) (Fission yeast).